Reading from the N-terminus, the 60-residue chain is Large ribosomal subunit protein bL33 (60 aa).

The protein belongs to the bacterial ribosomal protein bL33 family.

This chain is Large ribosomal subunit protein bL33, found in Flavobacterium psychrophilum (strain ATCC 49511 / DSM 21280 / CIP 103535 / JIP02/86).